Here is a 338-residue protein sequence, read N- to C-terminus: 1-aminocyclopropane-1-carboxylate deaminase (338 aa).

Lys51 is subject to N6-(pyridoxal phosphate)lysine. Ser78 acts as the Nucleophile in catalysis.

This sequence belongs to the ACC deaminase/D-cysteine desulfhydrase family. As to quaternary structure, homotrimer. Pyridoxal 5'-phosphate serves as cofactor.

The catalysed reaction is 1-aminocyclopropane-1-carboxylate + H2O = 2-oxobutanoate + NH4(+). Its function is as follows. Catalyzes a cyclopropane ring-opening reaction, the irreversible conversion of 1-aminocyclopropane-1-carboxylate (ACC) to ammonia and alpha-ketobutyrate. Allows growth on ACC as a nitrogen source. The polypeptide is 1-aminocyclopropane-1-carboxylate deaminase (Burkholderia lata (strain ATCC 17760 / DSM 23089 / LMG 22485 / NCIMB 9086 / R18194 / 383)).